A 338-amino-acid polypeptide reads, in one-letter code: Adenylosuccinate synthetase (338 aa).

Residues 12-18 (GDEGKGK) and 42-44 (GHT) each bind GTP. The Proton acceptor role is filled by Asp13. Mg(2+)-binding residues include Asp13 and Gly42. IMP-binding positions include 13–16 (DEGK), 40–43 (NAGH), Thr127, Arg141, Gln179, Thr194, and Arg256. The Proton donor role is filled by His43. 252–258 (TVTGRRR) contacts substrate. GTP is bound by residues Arg258, 284–286 (CLD), and 324–326 (STG).

Belongs to the adenylosuccinate synthetase family. As to quaternary structure, homodimer. Mg(2+) is required as a cofactor.

Its subcellular location is the cytoplasm. The catalysed reaction is IMP + L-aspartate + GTP = N(6)-(1,2-dicarboxyethyl)-AMP + GDP + phosphate + 2 H(+). It functions in the pathway purine metabolism; AMP biosynthesis via de novo pathway; AMP from IMP: step 1/2. Its function is as follows. Plays an important role in the de novo pathway of purine nucleotide biosynthesis. Catalyzes the first committed step in the biosynthesis of AMP from IMP. This is Adenylosuccinate synthetase from Methanococcus vannielii (strain ATCC 35089 / DSM 1224 / JCM 13029 / OCM 148 / SB).